The sequence spans 22 residues: MGFNGGILEGEEXKAVVTINXP.

It belongs to the enoyl-CoA hydratase/isomerase family.

The catalysed reaction is a short-chain (3S)-3-hydroxyacyl-CoA = a short-chain (2E)-enoyl-CoA + H2O. It participates in lipid metabolism; butanoate metabolism. This is Short-chain-enoyl-CoA hydratase (crt) from Clostridium pasteurianum.